The following is a 635-amino-acid chain: Cilia- and flagella-associated protein 206 (635 aa).

Belongs to the CFAP206 family.

The protein resides in the cytoplasm. The protein localises to the cytoskeleton. It is found in the cilium axoneme. Its function is as follows. May regulate cilium motility through its role in the assembly of the axonemal RS2 radial spoke. This Tetrahymena thermophila (strain SB210) protein is Cilia- and flagella-associated protein 206.